The chain runs to 201 residues: Small ribosomal subunit protein uS4c (201 aa).

Positions 89–157 (MRLDNILFRL…VQNYIASSDP (69 aa)) constitute an S4 RNA-binding domain.

It belongs to the universal ribosomal protein uS4 family. Part of the 30S ribosomal subunit. Contacts protein S5. The interaction surface between S4 and S5 is involved in control of translational fidelity.

Its subcellular location is the plastid. The protein resides in the chloroplast. Functionally, one of the primary rRNA binding proteins, it binds directly to 16S rRNA where it nucleates assembly of the body of the 30S subunit. In terms of biological role, with S5 and S12 plays an important role in translational accuracy. This chain is Small ribosomal subunit protein uS4c (rps4), found in Triticum aestivum (Wheat).